Consider the following 875-residue polypeptide: MKASEIRSAFLKFFESKGHQIVASSPVVPGDDPTLLFTNAGMNQFKDVFLGFDKRPYSRATTAQKCIRAGGKHNDLENVGYTARHHTFFEMLGNFSFGDYFKQDAIAYAWELLTEVFKLPKDKLWVTVYAEDDEAYEIWNKQVGVPAERIVRIGDNKGARYASDNFWMMGDTGPCGPCTEIFYDHGPEIPGGPPGSPDEDGDRYIEIWNNVFMQFNRDEAGVMHKLPKPSVDTGMGLERITAVLQHVHSNYEIDLFVALLAAAKQAVDAAGAGDSDKDSPSLKVIADHIRACSFTIVDGVIPGNEGRGYVLRRIARRGIRHGYKLGARKPFFHTLVAELVRQMGEAYPELARAEARVTEVLKQEEERFFQTIANGMEILESALAGGAKTLDGETAFKLHDTYGFPLDLTADVCRERGVTVDQAGFDAAMKRQREQARAAGKFKMAAGLEYAGAATTFHGYEHLVHEGSKVTAVYVDGSAVPSAKAGDDAVIVLDHTPFYAESGGQVGDGGELRNGTSRVIVEDTQKIQADVFGHHGRVVEGEIRVGDVLNARVDGEQRARTVRNHSVTHLMHKALREVLGGHVQQKGSLVNAERTRFDFAHNAPMSDAQIAKVEAIVNAEILANAPTQARVLPMEEAQKLGAMMLFGEKYGDEVRVLDIGSSRELCGGTHVQRTGDIGLFKVVAESGVAAGIRRVEAITGDNALAYVQQLEGTVAGLAGALKAAPAEVPGRVAAVLEQLRTLEKELAALKGKLASSQGDGLLAQAVDVKGLKVLAARLEGADAKALRDTLDQLKNKLKSAAIVLAVVEGGKVQLAAGVTADATARVKAGELVNFVAQQVGGKGGGKPDLAMAGGTDPAGLGAALASVAGWVGERA.

Zn(2+)-binding residues include H565, H569, C666, and H670.

It belongs to the class-II aminoacyl-tRNA synthetase family. Zn(2+) is required as a cofactor.

Its subcellular location is the cytoplasm. The enzyme catalyses tRNA(Ala) + L-alanine + ATP = L-alanyl-tRNA(Ala) + AMP + diphosphate. Functionally, catalyzes the attachment of alanine to tRNA(Ala) in a two-step reaction: alanine is first activated by ATP to form Ala-AMP and then transferred to the acceptor end of tRNA(Ala). Also edits incorrectly charged Ser-tRNA(Ala) and Gly-tRNA(Ala) via its editing domain. This chain is Alanine--tRNA ligase, found in Methylibium petroleiphilum (strain ATCC BAA-1232 / LMG 22953 / PM1).